The following is a 163-amino-acid chain: Nucleotide-binding protein BA_1166 (163 aa).

The protein belongs to the YajQ family.

Its function is as follows. Nucleotide-binding protein. The polypeptide is Nucleotide-binding protein BA_1166 (Bacillus anthracis).